Here is a 230-residue protein sequence, read N- to C-terminus: Flagellar L-ring protein (230 aa).

A signal peptide spans 1–18 (MNRLNIAVSCLATALLFG). Residue cysteine 19 is the site of N-palmitoyl cysteine attachment. A lipid anchor (S-diacylglycerol cysteine) is attached at cysteine 19.

This sequence belongs to the FlgH family. The basal body constitutes a major portion of the flagellar organelle and consists of four rings (L,P,S, and M) mounted on a central rod.

It localises to the cell outer membrane. Its subcellular location is the bacterial flagellum basal body. Functionally, assembles around the rod to form the L-ring and probably protects the motor/basal body from shearing forces during rotation. The chain is Flagellar L-ring protein from Legionella pneumophila (strain Corby).